Here is a 123-residue protein sequence, read N- to C-terminus: Histone H2B (123 aa).

The disordered stretch occupies residues 1–32; the sequence is MPPKAASKGAKKAASKAKAARSTDKKKRRRRR. Positions 9–32 are enriched in basic residues; the sequence is GAKKAASKAKAARSTDKKKRRRRR. A glycan (O-linked (GlcNAc) serine) is linked at Ser-110. Lys-118 is covalently cross-linked (Glycyl lysine isopeptide (Lys-Gly) (interchain with G-Cter in ubiquitin)).

Belongs to the histone H2B family. The nucleosome is a histone octamer containing two molecules each of H2A, H2B, H3 and H4 assembled in one H3-H4 heterotetramer and two H2A-H2B heterodimers. The octamer wraps approximately 147 bp of DNA. Post-translationally, monoubiquitination of Lys-118 gives a specific tag for epigenetic transcriptional activation and is also prerequisite for histone H3 'Lys-4' and 'Lys-79' methylation.

The protein resides in the nucleus. It is found in the chromosome. Functionally, core component of nucleosome. Nucleosomes wrap and compact DNA into chromatin, limiting DNA accessibility to the cellular machineries which require DNA as a template. Histones thereby play a central role in transcription regulation, DNA repair, DNA replication and chromosomal stability. DNA accessibility is regulated via a complex set of post-translational modifications of histones, also called histone code, and nucleosome remodeling. The chain is Histone H2B from Urechis caupo (Innkeeper worm).